Reading from the N-terminus, the 178-residue chain is GPI mannosyltransferase 2 subunit C167.09 (178 aa).

An N-terminal signal peptide occupies residues 1 to 20 (MREFRLIFVLLFFLPSFAIA). Residues 21-152 (NTEIINVETG…LGFLPKSVLP (132 aa)) are Lumenal-facing. N-linked (GlcNAc...) asparagine glycosylation is found at Asn48, Asn49, Asn106, Asn115, and Asn122. Residues 153–173 (IVGFVFVIILIALICMTNLFI) traverse the membrane as a helical segment. Residues 174 to 178 (KHKRD) lie on the Cytoplasmic side of the membrane.

Part of the GPI mannosyltransferase 2 complex composed of gpi18 and C167.09.

It is found in the endoplasmic reticulum membrane. It functions in the pathway glycolipid biosynthesis; glycosylphosphatidylinositol-anchor biosynthesis. Functionally, essential component of the GPI mannosyltransferase 2 complex. Responsible for the transfer of the second mannose to the glycosylphosphatidylinositol during GPI precursor assembly. This is GPI mannosyltransferase 2 subunit C167.09 from Schizosaccharomyces pombe (strain 972 / ATCC 24843) (Fission yeast).